The primary structure comprises 190 residues: Elongation factor P 2 (190 aa).

It belongs to the elongation factor P family.

It localises to the cytoplasm. It functions in the pathway protein biosynthesis; polypeptide chain elongation. Its function is as follows. Involved in peptide bond synthesis. Stimulates efficient translation and peptide-bond synthesis on native or reconstituted 70S ribosomes in vitro. Probably functions indirectly by altering the affinity of the ribosome for aminoacyl-tRNA, thus increasing their reactivity as acceptors for peptidyl transferase. The sequence is that of Elongation factor P 2 (efp2) from Protochlamydia amoebophila (strain UWE25).